A 105-amino-acid chain; its full sequence is Pyruvate synthase subunit PorD (105 aa).

4Fe-4S ferredoxin-type domains follow at residues 44–73 and 74–103; these read FKPE…LDEE and GYPV…MVRE. 8 residues coordinate [4Fe-4S] cluster: Cys53, Cys56, Cys59, Cys63, Cys83, Cys86, Cys89, and Cys93.

As to quaternary structure, heterotetramer of one alpha, one beta, one delta and one gamma chain. The cofactor is [4Fe-4S] cluster.

This Pyrococcus furiosus (strain ATCC 43587 / DSM 3638 / JCM 8422 / Vc1) protein is Pyruvate synthase subunit PorD (porD).